The chain runs to 294 residues: Acetyl-coenzyme A carboxylase carboxyl transferase subunit beta (294 aa).

The 266-residue stretch at 29–294 (LWEKCPECGQ…TQVVKLQTNA (266 aa)) folds into the CoA carboxyltransferase N-terminal domain. Residues Cys33, Cys36, Cys52, and Cys55 each coordinate Zn(2+). The C4-type zinc-finger motif lies at 33 to 55 (CPECGQVVYRKDLIDNCSVCSNC).

Belongs to the AccD/PCCB family. Acetyl-CoA carboxylase is a heterohexamer composed of biotin carboxyl carrier protein (AccB), biotin carboxylase (AccC) and two subunits each of ACCase subunit alpha (AccA) and ACCase subunit beta (AccD). Requires Zn(2+) as cofactor.

Its subcellular location is the cytoplasm. It carries out the reaction N(6)-carboxybiotinyl-L-lysyl-[protein] + acetyl-CoA = N(6)-biotinyl-L-lysyl-[protein] + malonyl-CoA. It participates in lipid metabolism; malonyl-CoA biosynthesis; malonyl-CoA from acetyl-CoA: step 1/1. Its function is as follows. Component of the acetyl coenzyme A carboxylase (ACC) complex. Biotin carboxylase (BC) catalyzes the carboxylation of biotin on its carrier protein (BCCP) and then the CO(2) group is transferred by the transcarboxylase to acetyl-CoA to form malonyl-CoA. This Prochlorococcus marinus (strain NATL2A) protein is Acetyl-coenzyme A carboxylase carboxyl transferase subunit beta.